Reading from the N-terminus, the 502-residue chain is Maturase K (502 aa).

This sequence belongs to the intron maturase 2 family. MatK subfamily.

It is found in the plastid. The protein localises to the chloroplast. In terms of biological role, usually encoded in the trnK tRNA gene intron. Probably assists in splicing its own and other chloroplast group II introns. The protein is Maturase K of Brassica oleracea (Wild cabbage).